The sequence spans 599 residues: Elongation factor 4 (599 aa).

The region spanning 2–184 is the tr-type G domain; that stretch reads KNIRNFSIIA…RLVRDIPPPE (183 aa). Residues 14 to 19 and 131 to 134 contribute to the GTP site; these read DHGKST and NKID.

It belongs to the TRAFAC class translation factor GTPase superfamily. Classic translation factor GTPase family. LepA subfamily.

It is found in the cell inner membrane. The enzyme catalyses GTP + H2O = GDP + phosphate + H(+). Required for accurate and efficient protein synthesis under certain stress conditions. May act as a fidelity factor of the translation reaction, by catalyzing a one-codon backward translocation of tRNAs on improperly translocated ribosomes. Back-translocation proceeds from a post-translocation (POST) complex to a pre-translocation (PRE) complex, thus giving elongation factor G a second chance to translocate the tRNAs correctly. Binds to ribosomes in a GTP-dependent manner. The sequence is that of Elongation factor 4 from Cronobacter sakazakii (strain ATCC BAA-894) (Enterobacter sakazakii).